The sequence spans 306 residues: UDP-N-acetylenolpyruvoylglucosamine reductase (306 aa).

The FAD-binding PCMH-type domain occupies Lys-28 to Gly-193. Arg-172 is a catalytic residue. The Proton donor role is filled by Ser-222. Glu-292 is an active-site residue.

The protein belongs to the MurB family. Requires FAD as cofactor.

The protein resides in the cytoplasm. The catalysed reaction is UDP-N-acetyl-alpha-D-muramate + NADP(+) = UDP-N-acetyl-3-O-(1-carboxyvinyl)-alpha-D-glucosamine + NADPH + H(+). The protein operates within cell wall biogenesis; peptidoglycan biosynthesis. Its function is as follows. Cell wall formation. This Streptococcus mutans serotype c (strain ATCC 700610 / UA159) protein is UDP-N-acetylenolpyruvoylglucosamine reductase.